The primary structure comprises 441 residues: DMEDDFMCDDEEDYDLEYSEDSNSEPNVDLENQYYNSKALKEDDPKAALSSFQKVLELEGEKGEWGFKALKQMIKINFKLGNYPEMMNRYKQLLTYIRSAVTRNYSEKSINSILDYISTSKQMDLLQEFYETTLDALKDAKNDRLWFKTNTKLGKLYLEREEYGKLQKILRQLHQSCQTDDGEDDLKKGTQLLEIYALEIQMYTAQKNNKKLKALYEQSLHIKSAIPHPLIMGVIRECGGKMHLREGEFEKAHTDFFEAFKNYDESGSPRRTTCLKYLVLANMLMKSGINPFDSQEAKPYKNDPEILAMTNLVSAYQNNDITEFEKILKTNHSNIMDDPFIREHIEELLRNIRTQVLIKLIKPYTRIHIPFISKELNIDVADVESLLVQCILDNTIHGRIDQVNQLLELDHQKRGGARYTALDKWTNQLNSLNQAVVSKLA.

Acidic residues predominate over residues aspartate 1–asparagine 23. The tract at residues aspartate 1–aspartate 29 is disordered. The PCI domain occupies alanine 252–arginine 414.

It belongs to the CSN2 family. In terms of assembly, component of the CSN complex, probably composed of cops1, cops2, cops3, cops4, cops5, cops6, cops7, cops8 and cops9.

It localises to the cytoplasm. The protein resides in the nucleus. Its function is as follows. Essential component of the COP9 signalosome complex (CSN), a complex involved in various cellular and developmental processes. The CSN complex is an essential regulator of the ubiquitin (Ubl) conjugation pathway by mediating the deneddylation of the cullin subunits of E3 ligase complexes, leading to modify the Ubl ligase activity. In Xenopus laevis (African clawed frog), this protein is COP9 signalosome complex subunit 2 (csn2).